A 236-amino-acid chain; its full sequence is tRNA1(Val) (adenine(37)-N6)-methyltransferase (236 aa).

This sequence belongs to the methyltransferase superfamily. tRNA (adenine-N(6)-)-methyltransferase family.

It is found in the cytoplasm. The enzyme catalyses adenosine(37) in tRNA1(Val) + S-adenosyl-L-methionine = N(6)-methyladenosine(37) in tRNA1(Val) + S-adenosyl-L-homocysteine + H(+). In terms of biological role, specifically methylates the adenine in position 37 of tRNA(1)(Val) (anticodon cmo5UAC). The protein is tRNA1(Val) (adenine(37)-N6)-methyltransferase of Shewanella sp. (strain MR-7).